The primary structure comprises 636 residues: Sodium-dependent proline transporter (636 aa).

The Cytoplasmic segment spans residues 1 to 45 (MKKLQGAHLRKPVTPDLLMTPSDQGDVDLDVDFAAHRGNWTGKLD). Position 20 is a phosphothreonine (Thr-20). The residue at position 22 (Ser-22) is a Phosphoserine. Helical transmembrane passes span 46–66 (FLLS…FPYR), 74–93 (AFLV…LFFL), and 117–137 (GAGA…NMII). The Extracellular portion of the chain corresponds to 138-214 (AYVLFYLFAS…QGIGSPGEIR (77 aa)). Asn-182 carries an N-linked (GlcNAc...) asparagine glycan. A run of 9 helical transmembrane segments spans residues 215-233 (WNLC…LCIL), 242-259 (VVYF…MLLV), 295-312 (IFYS…FASY), 324-345 (FIVT…FSVL), 378-397 (LPLS…TLGL), 425-443 (VFSG…ILTT), 459-479 (SFGL…VYGI), 500-519 (ACWL…YSIV), and 538-556 (LGIL…GMLV). Residues 557–636 (AVLREEGSLW…EIAEEEESMM (80 aa)) lie on the Cytoplasmic side of the membrane. Phosphoserine occurs at positions 573 and 582. At Thr-588 the chain carries Phosphothreonine. The residue at position 591 (Tyr-591) is a Phosphotyrosine. Phosphoserine occurs at positions 598 and 600.

It belongs to the sodium:neurotransmitter symporter (SNF) (TC 2.A.22) family. SLC6A7 subfamily. As to expression, brain specific (at protein level). Highly expressed in hippocampus, corpus striatum and temporal cortex. Also expressed in frontal cortex, occipital cortex and, at lower levels, in cerebellum and parietal cortex (at protein level).

Its subcellular location is the synaptic cell membrane. The catalysed reaction is L-proline(out) + chloride(out) + 2 Na(+)(out) = L-proline(in) + chloride(in) + 2 Na(+)(in). It carries out the reaction L-pipecolate(out) + chloride(out) + 2 Na(+)(out) = L-pipecolate(in) + chloride(in) + 2 Na(+)(in). Brain specific sodium (and chloride)-dependent proline transporter. Terminates the action of proline by its high affinity sodium-dependent reuptake into presynaptic terminals. In Homo sapiens (Human), this protein is Sodium-dependent proline transporter.